A 257-amino-acid chain; its full sequence is Small ribosomal subunit protein eS1 (257 aa).

Residues 237 to 257 are disordered; that stretch reads GADGEKVDRPDDYEPPVQQEV. The segment covering 239–248 has biased composition (basic and acidic residues); sequence DGEKVDRPDD.

The protein belongs to the eukaryotic ribosomal protein eS1 family. As to quaternary structure, component of the small ribosomal subunit. Mature ribosomes consist of a small (40S) and a large (60S) subunit. The 40S subunit contains about 33 different proteins and 1 molecule of RNA (18S). The 60S subunit contains about 49 different proteins and 3 molecules of RNA (28S, 5.8S and 5S).

The protein resides in the cytoplasm. This chain is Small ribosomal subunit protein eS1, found in Caenorhabditis elegans.